Consider the following 210-residue polypeptide: ATP phosphoribosyltransferase (210 aa).

Belongs to the ATP phosphoribosyltransferase family. Short subfamily. As to quaternary structure, heteromultimer composed of HisG and HisZ subunits.

Its subcellular location is the cytoplasm. The enzyme catalyses 1-(5-phospho-beta-D-ribosyl)-ATP + diphosphate = 5-phospho-alpha-D-ribose 1-diphosphate + ATP. The protein operates within amino-acid biosynthesis; L-histidine biosynthesis; L-histidine from 5-phospho-alpha-D-ribose 1-diphosphate: step 1/9. Functionally, catalyzes the condensation of ATP and 5-phosphoribose 1-diphosphate to form N'-(5'-phosphoribosyl)-ATP (PR-ATP). Has a crucial role in the pathway because the rate of histidine biosynthesis seems to be controlled primarily by regulation of HisG enzymatic activity. This is ATP phosphoribosyltransferase from Picosynechococcus sp. (strain ATCC 27264 / PCC 7002 / PR-6) (Agmenellum quadruplicatum).